Reading from the N-terminus, the 120-residue chain is NAD(P)H-quinone oxidoreductase subunit 3, chloroplastic (120 aa).

A run of 3 helical transmembrane segments spans residues 9-29 (IFWA…LISG), 64-84 (MFAL…PWAM), and 88-108 (VLGV…IVGL).

This sequence belongs to the complex I subunit 3 family. NDH is composed of at least 16 different subunits, 5 of which are encoded in the nucleus.

It is found in the plastid. The protein resides in the chloroplast thylakoid membrane. The enzyme catalyses a plastoquinone + NADH + (n+1) H(+)(in) = a plastoquinol + NAD(+) + n H(+)(out). It carries out the reaction a plastoquinone + NADPH + (n+1) H(+)(in) = a plastoquinol + NADP(+) + n H(+)(out). In terms of biological role, NDH shuttles electrons from NAD(P)H:plastoquinone, via FMN and iron-sulfur (Fe-S) centers, to quinones in the photosynthetic chain and possibly in a chloroplast respiratory chain. The immediate electron acceptor for the enzyme in this species is believed to be plastoquinone. Couples the redox reaction to proton translocation, and thus conserves the redox energy in a proton gradient. This chain is NAD(P)H-quinone oxidoreductase subunit 3, chloroplastic, found in Ranunculus macranthus (Large buttercup).